We begin with the raw amino-acid sequence, 1164 residues long: Phospholipid-transporting ATPase IA (1164 aa).

Topologically, residues 1–65 (MPTMRRTVSE…TAKYNIITFL (65 aa)) are cytoplasmic. Ser25 bears the Phosphoserine mark. Phosphothreonine is present on Thr28. Position 29 is a phosphoserine (Ser29). A helical transmembrane segment spans residues 66 to 86 (PRFLYSQFRRAANSFFLFIAL). The Exoplasmic loop portion of the chain corresponds to 87–92 (LQQIPD). Residues 93 to 115 (VSPTGRYTTLVPLLFILAVAAIK) form a helical membrane-spanning segment. Topologically, residues 116–297 (EIIEDIKRHK…SNVERITNVQ (182 aa)) are cytoplasmic. Residues 298-319 (ILILFCILIAMSLVCSVGSAIW) form a helical membrane-spanning segment. The Exoplasmic loop portion of the chain corresponds to 320 to 344 (NRRHSGKDWYLNLNYGGASNFGLNF). The chain crosses the membrane as a helical span at residues 345-366 (LTFIILFNNLIPISLLVTLEVV). Over 367-857 (KFTQAYFINW…GAWNYNRVSK (491 aa)) the chain is Cytoplasmic. The active-site 4-aspartylphosphate intermediate is the Asp409. ATP is bound by residues Asp409, Lys410, and Thr411. A Mg(2+)-binding site is contributed by Asp409. Thr411 serves as a coordination point for Mg(2+). Ser443 carries the post-translational modification Phosphoserine. ATP contacts are provided by residues Glu508, Phe549, Lys572, Arg605, Thr685, Gly686, Asp687, 741 to 748 (ALIIDGKT), Arg775, and Lys781. A Mg(2+)-binding site is contributed by Asp801. The ATP site is built by Asn804 and Asp805. Residue Asp805 participates in Mg(2+) binding. A helical membrane pass occupies residues 858–878 (CILYCFYKNIVLYIIEIWFAF). Topologically, residues 879 to 890 (VNGFSGQILFER) are exoplasmic loop. Residues 891-910 (WCIGLYNVMFTAMPPLTLGI) traverse the membrane as a helical segment. The Cytoplasmic segment spans residues 911–940 (FERSCRKENMLKYPELYKTSQNALDFNTKV). Residues 941-962 (FWVHCLNGLFHSVILFWFPLKA) traverse the membrane as a helical segment. Topologically, residues 963–976 (LQYGTAFGNGKTSD) are exoplasmic loop. The chain crosses the membrane as a helical span at residues 977-999 (YLLLGNFVYTFVVITVCLKAGLE). Over 1000-1005 (TSYWTW) the chain is Cytoplasmic. The helical transmembrane segment at 1006–1026 (FSHIAIWGSIALWVVFFGIYS) threads the bilayer. Residues 1027 to 1044 (SLWPAIPMAPDMSGEAAM) are Exoplasmic loop-facing. A helical transmembrane segment spans residues 1045-1070 (LFSSGVFWMGLLFIPVASLLLDVVYK). At 1071 to 1164 (VIKRTAFKTL…DTTKQRPDEW (94 aa)) the chain is on the cytoplasmic side. 1095-1102 (GAVVLGKS) contacts ATP. The residue at position 1126 (Ser1126) is a Phosphoserine.

It belongs to the cation transport ATPase (P-type) (TC 3.A.3) family. Type IV subfamily. In terms of assembly, component of a P4-ATPase flippase complex which consists of a catalytic alpha subunit and an accessory beta subunit. Interacts with TMEM30A to form a flippase complex; this complex forms an intermediate phosphoenzyme. Interacts with TMEM30B; this interaction is reported conflictingly. The cofactor is Mg(2+). Cleaved by calpain in a caspase- and calcium influx-dependent manner during platelet apoptosis leading to a 100 kDa polypeptide. Found in most adult tissues except liver, testis and placenta. Most abundant in heart, brain and skeletal muscle. Also detected in fetal tissues. Isoform 1 is only detected in brain, skeletal muscle and heart and is the most abundant form in skeletal muscle. Highly expressed in platelets.

The protein resides in the cytoplasmic vesicle. The protein localises to the secretory vesicle. Its subcellular location is the chromaffin granule membrane. It is found in the cytoplasmic granule. It localises to the cell membrane. The protein resides in the endoplasmic reticulum. The protein localises to the golgi apparatus. It carries out the reaction ATP + H2O + phospholipidSide 1 = ADP + phosphate + phospholipidSide 2.. The enzyme catalyses a 1,2-diacyl-sn-glycero-3-phospho-L-serine(out) + ATP + H2O = a 1,2-diacyl-sn-glycero-3-phospho-L-serine(in) + ADP + phosphate + H(+). Its activity is regulated as follows. ATPase activity is stimulated by phosphatidylserine (PS) and minimally by phosphatidylethanolamine (PE). ATPase activity is inhibited by beryllium fluoride and aluminum trifluoride. Its function is as follows. Catalytic component of a P4-ATPase flippase complex which catalyzes the hydrolysis of ATP coupled to the transport of aminophospholipids from the outer to the inner leaflet of various membranes and ensures the maintenance of asymmetric distribution of phospholipids. Phospholipid translocation also seems to be implicated in vesicle formation and in uptake of lipid signaling molecules. In vitro, its ATPase activity is selectively and stereospecifically stimulated by phosphatidylserine (PS). The flippase complex ATP8A1:TMEM30A seems to play a role in regulation of cell migration probably involving flippase-mediated translocation of phosphatidylethanolamine (PE) at the cell membrane. Acts as aminophospholipid translocase at the cell membrane in neuronal cells. This chain is Phospholipid-transporting ATPase IA, found in Homo sapiens (Human).